The sequence spans 250 residues: MARELKEVQGIIFKRQKYKEADLLAKIMTKQDGIITLIVKGALRPKSQLSAATLNFSMGTYVIYTSGHGLSNLRTYKEVKQFDGLYRDLTKNAYTSFIFDLIDHAFVEYQPLGKYYDLAVFALKKIDAGVDNEMITQIVQMKMLSAFGVEPELRHCVICGKERGVFDYSIKLGGIVCSDHFAKVNSRLHLTPKQTAVLRTIGLLPIERLGNIELNSETKKATRKAIDRIYRETIDLNLKTKKFLDEIKLF.

The protein belongs to the RecO family.

Involved in DNA repair and RecF pathway recombination. The protein is DNA repair protein RecO of Lactobacillus helveticus (strain DPC 4571).